Reading from the N-terminus, the 418-residue chain is UDP-N-acetylglucosamine 1-carboxyvinyltransferase 2 (418 aa).

Residue 22 to 23 (KN) participates in phosphoenolpyruvate binding. Arg92 contacts UDP-N-acetyl-alpha-D-glucosamine. Cys116 serves as the catalytic Proton donor. Cys116 carries the post-translational modification 2-(S-cysteinyl)pyruvic acid O-phosphothioketal. The UDP-N-acetyl-alpha-D-glucosamine site is built by Asp305 and Ile327.

It belongs to the EPSP synthase family. MurA subfamily.

The protein resides in the cytoplasm. The catalysed reaction is phosphoenolpyruvate + UDP-N-acetyl-alpha-D-glucosamine = UDP-N-acetyl-3-O-(1-carboxyvinyl)-alpha-D-glucosamine + phosphate. It functions in the pathway cell wall biogenesis; peptidoglycan biosynthesis. Functionally, cell wall formation. Adds enolpyruvyl to UDP-N-acetylglucosamine. The chain is UDP-N-acetylglucosamine 1-carboxyvinyltransferase 2 from Mesorhizobium japonicum (strain LMG 29417 / CECT 9101 / MAFF 303099) (Mesorhizobium loti (strain MAFF 303099)).